The chain runs to 132 residues: MAKEYSRTQRIGDQMQRELAELIRREVKDPRVGLVTITAVDVSRDLGHAKVFITVMGQDGTDAVPQTLKALTSAASFLRLHLGRVMQLRSVPQLHFHFDESVSRGVHLSALIERAVAEDRLHQDAGEPDTKE.

This sequence belongs to the RbfA family. In terms of assembly, monomer. Binds 30S ribosomal subunits, but not 50S ribosomal subunits or 70S ribosomes.

It is found in the cytoplasm. Functionally, one of several proteins that assist in the late maturation steps of the functional core of the 30S ribosomal subunit. Associates with free 30S ribosomal subunits (but not with 30S subunits that are part of 70S ribosomes or polysomes). Required for efficient processing of 16S rRNA. May interact with the 5'-terminal helix region of 16S rRNA. This is Ribosome-binding factor A from Pseudomonas entomophila (strain L48).